The primary structure comprises 370 residues: MEFTLIKQDGAARRGTVSLAHGDVQTPAFMPVGTYGAVKSLSPVEVRDTGAHILLGNTFHLWLRPGLEVIGEFGGLHRFMGWNGPILTDSGGFQVWSLGDLRKITEEGVRFRSPINGDSCFLTPEESMRIQKVLNSDIVMIFDECTPYPATPADARDSMLLSLRWAARSKAAHQGNPNALFGIIQGGMYEDLRDESLAGLTEIGFDGYAIGGLSVGEPKEDMLRILAHTTPKMPQDKPRYLMGVGTPEDLVAAVSHGVDMFDCVMPTRNARNGWLFTRHGDIKLKNARHRKDTRPLDEHCQCYTCLNFSRAYLHHLHRSGEILGARLNTIHNLHYYQELMLGMRQAIEQGRFEAFATEFRQGRQMLQQSA.

Residue Asp89 is the Proton acceptor of the active site. Substrate-binding positions include 89-93, Asp143, Gln185, and Gly212; that span reads DSGGF. Residues 243–249 form an RNA binding region; that stretch reads GVGTPED. Asp262 functions as the Nucleophile in the catalytic mechanism. The interval 267-271 is RNA binding; important for wobble base 34 recognition; that stretch reads TRNAR. Positions 300, 302, 305, and 331 each coordinate Zn(2+).

The protein belongs to the queuine tRNA-ribosyltransferase family. Homodimer. Within each dimer, one monomer is responsible for RNA recognition and catalysis, while the other monomer binds to the replacement base PreQ1. The cofactor is Zn(2+).

The catalysed reaction is 7-aminomethyl-7-carbaguanine + guanosine(34) in tRNA = 7-aminomethyl-7-carbaguanosine(34) in tRNA + guanine. It functions in the pathway tRNA modification; tRNA-queuosine biosynthesis. Functionally, catalyzes the base-exchange of a guanine (G) residue with the queuine precursor 7-aminomethyl-7-deazaguanine (PreQ1) at position 34 (anticodon wobble position) in tRNAs with GU(N) anticodons (tRNA-Asp, -Asn, -His and -Tyr). Catalysis occurs through a double-displacement mechanism. The nucleophile active site attacks the C1' of nucleotide 34 to detach the guanine base from the RNA, forming a covalent enzyme-RNA intermediate. The proton acceptor active site deprotonates the incoming PreQ1, allowing a nucleophilic attack on the C1' of the ribose to form the product. After dissociation, two additional enzymatic reactions on the tRNA convert PreQ1 to queuine (Q), resulting in the hypermodified nucleoside queuosine (7-(((4,5-cis-dihydroxy-2-cyclopenten-1-yl)amino)methyl)-7-deazaguanosine). This Methylobacillus flagellatus (strain ATCC 51484 / DSM 6875 / VKM B-1610 / KT) protein is Queuine tRNA-ribosyltransferase.